The following is a 1009-amino-acid chain: Probable beta-galactosidase B (1009 aa).

Residues 1–21 (MAQLFTKIIVYFLLFASPLLA) form the signal peptide. The N-linked (GlcNAc...) asparagine glycan is linked to Asn-28. Residue Tyr-85 participates in substrate binding. Asn-95 carries N-linked (GlcNAc...) asparagine glycosylation. Substrate is bound by residues Asn-130, Ala-131, Glu-132, and Asn-190. Glu-191 functions as the Proton donor in the catalytic mechanism. N-linked (GlcNAc...) asparagine glycosylation occurs at Asn-247. Residue Tyr-260 participates in substrate binding. Cys-266 and Cys-319 are oxidised to a cystine. Glu-303 serves as the catalytic Nucleophile. Substrate is bound at residue Tyr-368. Asn-375, Asn-406, Asn-427, Asn-451, Asn-682, Asn-740, Asn-771, Asn-784, Asn-826, and Asn-883 each carry an N-linked (GlcNAc...) asparagine glycan.

The protein belongs to the glycosyl hydrolase 35 family.

Its subcellular location is the secreted. The enzyme catalyses Hydrolysis of terminal non-reducing beta-D-galactose residues in beta-D-galactosides.. In terms of biological role, cleaves beta-linked terminal galactosyl residues from gangliosides, glycoproteins, and glycosaminoglycans. The polypeptide is Probable beta-galactosidase B (lacB) (Talaromyces marneffei (strain ATCC 18224 / CBS 334.59 / QM 7333) (Penicillium marneffei)).